The primary structure comprises 128 residues: uncharacterized protein (128 aa).

To M.jannaschii MJ0766.

This is an uncharacterized protein from Methanocaldococcus jannaschii (strain ATCC 43067 / DSM 2661 / JAL-1 / JCM 10045 / NBRC 100440) (Methanococcus jannaschii).